A 185-amino-acid chain; its full sequence is Ribosome-recycling factor (185 aa).

The interval 140 to 166 (KRQEKDGDITEDEQRSLEKQVQKVTDD) is disordered.

This sequence belongs to the RRF family.

It localises to the cytoplasm. Its function is as follows. Responsible for the release of ribosomes from messenger RNA at the termination of protein biosynthesis. May increase the efficiency of translation by recycling ribosomes from one round of translation to another. In Lactobacillus johnsonii (strain CNCM I-12250 / La1 / NCC 533), this protein is Ribosome-recycling factor.